The following is a 724-amino-acid chain: Ribosomal protein S6 kinase alpha-1 (724 aa).

Residue Ser-54 is modified to Phosphoserine. In terms of domain architecture, Protein kinase 1 spans Phe-62–Tyr-310. ATP contacts are provided by residues Leu-68–Val-76 and Lys-94. The active-site Proton acceptor is the Asp-187. Ser-221 is subject to Phosphoserine; by PDPK1. Ser-296 carries the phosphoserine modification. The region spanning Ser-311–Gly-380 is the AGC-kinase C-terminal domain. A Phosphothreonine modification is found at Thr-348. Phosphoserine is present on residues Ser-352, Ser-358, and Ser-369. One can recognise a Protein kinase 2 domain in the interval Tyr-407 to Ile-664. Residues Ile-413 to Cys-421 and Lys-436 contribute to the ATP site. Asp-524 acts as the Proton acceptor in catalysis. Residue Thr-562 is modified to Phosphothreonine. Residue Ser-721 is modified to Phosphoserine.

It belongs to the protein kinase superfamily. AGC Ser/Thr protein kinase family. S6 kinase subfamily. Forms a complex with either MAPK1/ERK2 or MAPK3/ERK1 in quiescent cells. Transiently dissociates following mitogenic stimulation. Interacts with ETV1/ER81 and FGFR1. The cofactor is Mg(2+). Activated by phosphorylation at Ser-221 by PDPK1. Autophosphorylated on Ser-369, as part of the activation process. May be phosphorylated at Thr-348 and Ser-352 by MAPK1/ERK2 and MAPK3/ERK1. In terms of processing, N-terminal myristoylation results in an activated kinase in the absence of added growth factors. In terms of tissue distribution, intestine, thymus, and lung.

It is found in the nucleus. The protein resides in the cytoplasm. The catalysed reaction is L-seryl-[protein] + ATP = O-phospho-L-seryl-[protein] + ADP + H(+). It carries out the reaction L-threonyl-[protein] + ATP = O-phospho-L-threonyl-[protein] + ADP + H(+). Upon extracellular signal or mitogen stimulation, phosphorylated at Thr-562 in the C-terminal kinase domain (CTKD) by MAPK1/ERK2 and MAPK3/ERK1. The activated CTKD then autophosphorylates Ser-369, allowing binding of PDPK1, which in turn phosphorylates Ser-221 in the N-terminal kinase domain (NTDK) leading to the full activation of the protein and subsequent phosphorylation of the substrates by the NTKD. Functionally, serine/threonine-protein kinase that acts downstream of ERK (MAPK1/ERK2 and MAPK3/ERK1) signaling and mediates mitogenic and stress-induced activation of the transcription factors CREB1, ETV1/ER81 and NR4A1/NUR77, regulates translation through RPS6 and EIF4B phosphorylation, and mediates cellular proliferation, survival, and differentiation by modulating mTOR signaling and repressing pro-apoptotic function of BAD and DAPK1. In fibroblast, is required for EGF-stimulated phosphorylation of CREB1, which results in the subsequent transcriptional activation of several immediate-early genes. In response to mitogenic stimulation (EGF and PMA), phosphorylates and activates NR4A1/NUR77 and ETV1/ER81 transcription factors and the cofactor CREBBP. Upon insulin-derived signal, acts indirectly on the transcription regulation of several genes by phosphorylating GSK3B at 'Ser-9' and inhibiting its activity. Phosphorylates RPS6 in response to serum or EGF via an mTOR-independent mechanism and promotes translation initiation by facilitating assembly of the pre-initiation complex. In response to insulin, phosphorylates EIF4B, enhancing EIF4B affinity for the EIF3 complex and stimulating cap-dependent translation. Is involved in the mTOR nutrient-sensing pathway by directly phosphorylating TSC2 at 'Ser-1798', which potently inhibits TSC2 ability to suppress mTOR signaling, and mediates phosphorylation of RPTOR, which regulates mTORC1 activity and may promote rapamycin-sensitive signaling independently of the PI3K/AKT pathway. Also involved in feedback regulation of mTORC1 and mTORC2 by phosphorylating DEPTOR. Mediates cell survival by phosphorylating the pro-apoptotic proteins BAD and DAPK1 and suppressing their pro-apoptotic function. Promotes the survival of hepatic stellate cells by phosphorylating CEBPB in response to the hepatotoxin carbon tetrachloride (CCl4). Mediates induction of hepatocyte prolifration by TGFA through phosphorylation of CEBPB. Is involved in cell cycle regulation by phosphorylating the CDK inhibitor CDKN1B, which promotes CDKN1B association with 14-3-3 proteins and prevents its translocation to the nucleus and inhibition of G1 progression. Phosphorylates EPHA2 at 'Ser-897', the RPS6KA-EPHA2 signaling pathway controls cell migration. In response to mTORC1 activation, phosphorylates EIF4B at 'Ser-406' and 'Ser-422' which stimulates bicarbonate cotransporter SLC4A7 mRNA translation, increasing SLC4A7 protein abundance and function. The sequence is that of Ribosomal protein S6 kinase alpha-1 (Rps6ka1) from Mus musculus (Mouse).